The following is a 299-amino-acid chain: Recombination-associated protein RdgC (299 aa).

The protein belongs to the RdgC family.

The protein localises to the cytoplasm. The protein resides in the nucleoid. Functionally, may be involved in recombination. This is Recombination-associated protein RdgC from Neisseria meningitidis serogroup C (strain 053442).